A 955-amino-acid polypeptide reads, in one-letter code: 4-alpha-glucanotransferase DPE2 (955 aa).

An N-acetylmethionine modification is found at Met1. CBM20 domains lie at 13 to 122 (KSSK…LWQS) and 157 to 270 (SDQD…PWRG). Residues 925 to 955 (SGRSVPANVSGEDINKSRGEVIANGSTKPNP) are disordered.

The protein belongs to the disproportionating enzyme family.

It localises to the cytoplasm. Its subcellular location is the cytosol. The enzyme catalyses Transfers a segment of a (1-&gt;4)-alpha-D-glucan to a new position in an acceptor, which may be glucose or a (1-&gt;4)-alpha-D-glucan.. With respect to regulation, inactivated in response to cold stress. Cytosolic alpha-glucanotransferase essential for the cytosolic metabolism of maltose, an intermediate on the pathway by which starch is converted to sucrose in leaves at night. Metabolizes maltose exported from the chloroplast and is specific for beta-maltose. May play a role in freezing tolerance. Temperature drop induces inactivation of DPE2 that leads to rapid accumulation of maltose, a solute that protects cells from freezing damage. The sequence is that of 4-alpha-glucanotransferase DPE2 (DPE2) from Arabidopsis thaliana (Mouse-ear cress).